Here is a 1086-residue protein sequence, read N- to C-terminus: Tyrosine-protein kinase receptor svh-2 (1086 aa).

The first 34 residues, 1 to 34 (MVLGSSQSSAKELTTQSSIFRFLVLLLCFTSATG), serve as a signal peptide directing secretion. The Extracellular segment spans residues 35 to 651 (GQINGKLLNG…DKKGSSPGWK (617 aa)). 5 N-linked (GlcNAc...) asparagine glycosylation sites follow: Asn-276, Asn-299, Asn-461, Asn-554, and Asn-617. A helical transmembrane segment spans residues 652-672 (IAIAIISVMTIILIVAIIVYY). The Cytoplasmic portion of the chain corresponds to 673–1086 (MRNRFPRIKT…LLSECSETSV (414 aa)). Positions 735-996 (VDKLDPIGQG…SDLVTIIPNV (262 aa)) constitute a Protein kinase domain. ATP is bound by residues 741-749 (IGQGHYGVV) and Lys-767. Asp-858 acts as the Proton acceptor in catalysis. Position 890 is a phosphotyrosine (Tyr-890). The interval 1056-1086 (AELPSDSPSTSTAIPQSTPYQLLSECSETSV) is disordered. Residues 1061–1086 (DSPSTSTAIPQSTPYQLLSECSETSV) show a composition bias toward polar residues.

The protein belongs to the protein kinase superfamily. Tyr protein kinase family. As to quaternary structure, interacts (via cytoplasmic domain) with mlk-1. Interacts with shc-1 (via SH2 domain). May interact (when tyrosine-phosphorylated) with tns-1 (via SH2 domain). Post-translationally, may be autophosphorylated on Tyr-890 following dimerization. Expressed in body wall and vulva muscles, pharynx, intestine, excretory canals, distal tip cells and some neurons. Expressed in D-type motor neurons upon axon injury.

Its subcellular location is the cell membrane. The enzyme catalyses L-tyrosyl-[protein] + ATP = O-phospho-L-tyrosyl-[protein] + ADP + H(+). Receptor tyrosine kinase which may phosphorylate mlk-1, a component of the mlk-1, mek-1 and kgb-1 pathway. Involved in axon regeneration after injury by promoting the generation of productive and stable growth cones. In Caenorhabditis elegans, this protein is Tyrosine-protein kinase receptor svh-2.